The primary structure comprises 325 residues: Replication factor C small subunit (325 aa).

Residue 54–61 (GPAGTGKT) participates in ATP binding.

It belongs to the activator 1 small subunits family. RfcS subfamily. In terms of assembly, heteromultimer composed of small subunits (RfcS) and large subunits (RfcL).

In terms of biological role, part of the RFC clamp loader complex which loads the PCNA sliding clamp onto DNA. The sequence is that of Replication factor C small subunit from Haloarcula marismortui (strain ATCC 43049 / DSM 3752 / JCM 8966 / VKM B-1809) (Halobacterium marismortui).